The chain runs to 191 residues: MSLISRLKAVVAGDEYLDDDFDELDYATEDELNDINDFKQTQRNSNALANSNPFDFMNNNRSSKVVGMPGISNSSSEVSLMEPRSFDEMPQAIQALRERKTVILNLTMMDPDQAQRAVDFIAGGTYAIDGHQERVGESIFLFAPSCVNVTSSSPEEASPSSVSPKNTPQYSVENNTAPEPAWGNSKLSAFS.

The interval 150 to 191 (TSSSPEEASPSSVSPKNTPQYSVENNTAPEPAWGNSKLSAFS) is disordered. Positions 151-164 (SSSPEEASPSSVSP) are enriched in low complexity. The segment covering 165 to 177 (KNTPQYSVENNTA) has biased composition (polar residues).

It belongs to the SepF family. In terms of assembly, homodimer. Interacts with FtsZ.

It is found in the cytoplasm. Functionally, cell division protein that is part of the divisome complex and is recruited early to the Z-ring. Probably stimulates Z-ring formation, perhaps through the cross-linking of FtsZ protofilaments. Its function overlaps with FtsA. The sequence is that of Cell division protein SepF from Prochlorococcus marinus (strain MIT 9312).